The sequence spans 155 residues: 3-hydroxyacyl-[acyl-carrier-protein] dehydratase FabZ (155 aa).

Residue H58 is part of the active site.

This sequence belongs to the thioester dehydratase family. FabZ subfamily.

Its subcellular location is the cytoplasm. It carries out the reaction a (3R)-hydroxyacyl-[ACP] = a (2E)-enoyl-[ACP] + H2O. Functionally, involved in unsaturated fatty acids biosynthesis. Catalyzes the dehydration of short chain beta-hydroxyacyl-ACPs and long chain saturated and unsaturated beta-hydroxyacyl-ACPs. The protein is 3-hydroxyacyl-[acyl-carrier-protein] dehydratase FabZ of Rhizobium etli (strain CIAT 652).